Reading from the N-terminus, the 265-residue chain is Methyl-coenzyme M reductase II subunit gamma (265 aa).

Position 123 (R123) interacts with coenzyme M.

This sequence belongs to the methyl-coenzyme M reductase gamma subunit family. MCR is a hexamer of two alpha, two beta, and two gamma chains, forming a dimer of heterotrimers. Coenzyme F430 is required as a cofactor.

The enzyme catalyses coenzyme B + methyl-coenzyme M = methane + coenzyme M-coenzyme B heterodisulfide. The protein operates within one-carbon metabolism; methyl-coenzyme M reduction; methane from methyl-coenzyme M: step 1/1. Its function is as follows. Component of the methyl-coenzyme M reductase (MCR) I that catalyzes the reductive cleavage of methyl-coenzyme M (CoM-S-CH3 or 2-(methylthio)ethanesulfonate) using coenzyme B (CoB or 7-mercaptoheptanoylthreonine phosphate) as reductant which results in the production of methane and the mixed heterodisulfide of CoB and CoM (CoM-S-S-CoB). This is the final step in methanogenesis. This chain is Methyl-coenzyme M reductase II subunit gamma (mrtG), found in Methanothermobacter thermautotrophicus (strain ATCC 29096 / DSM 1053 / JCM 10044 / NBRC 100330 / Delta H) (Methanobacterium thermoautotrophicum).